The primary structure comprises 700 residues: Polyribonucleotide nucleotidyltransferase (700 aa).

Residues D485 and D491 each contribute to the Mg(2+) site. The KH domain occupies 552–611; the sequence is PRITVIKINPEKIRDVIGKGGAVIRALTEETGTTIELEDDGTVKIASSNGEATKEAIRRI. Positions 621-689 constitute an S1 motif domain; that stretch reads GRIYNGKVIR…RQGRVRLSIK (69 aa).

It belongs to the polyribonucleotide nucleotidyltransferase family. Component of the RNA degradosome, which is a multiprotein complex involved in RNA processing and mRNA degradation. Requires Mg(2+) as cofactor.

The protein localises to the cytoplasm. It carries out the reaction RNA(n+1) + phosphate = RNA(n) + a ribonucleoside 5'-diphosphate. In terms of biological role, involved in mRNA degradation. Catalyzes the phosphorolysis of single-stranded polyribonucleotides processively in the 3'- to 5'-direction. The polypeptide is Polyribonucleotide nucleotidyltransferase (Shewanella baltica (strain OS185)).